Here is a 488-residue protein sequence, read N- to C-terminus: Glutamyl-tRNA(Gln) amidotransferase subunit A (488 aa).

Catalysis depends on charge relay system residues Lys-77 and Ser-152. Residue Ser-176 is the Acyl-ester intermediate of the active site.

The protein belongs to the amidase family. GatA subfamily. In terms of assembly, heterotrimer of A, B and C subunits.

The enzyme catalyses L-glutamyl-tRNA(Gln) + L-glutamine + ATP + H2O = L-glutaminyl-tRNA(Gln) + L-glutamate + ADP + phosphate + H(+). In terms of biological role, allows the formation of correctly charged Gln-tRNA(Gln) through the transamidation of misacylated Glu-tRNA(Gln) in organisms which lack glutaminyl-tRNA synthetase. The reaction takes place in the presence of glutamine and ATP through an activated gamma-phospho-Glu-tRNA(Gln). This Streptococcus pyogenes serotype M3 (strain ATCC BAA-595 / MGAS315) protein is Glutamyl-tRNA(Gln) amidotransferase subunit A.